The chain runs to 618 residues: Sodium/iodide cotransporter (618 aa).

At 1 to 14 (MEGAEAGARATFGP) the chain is on the extracellular side. A helical transmembrane segment spans residues 15 to 31 (WDYGVFATMLLVSTGIG). The Cytoplasmic segment spans residues 32–56 (LWVGLARGGQRSADDFFTGGRQLAA). Residues 57 to 80 (VPVGLSLAASFMSAVQVLGVPAEA) form a discontinuously helical membrane-spanning segment. Residues Ser69, Val71, and Gln72 each coordinate Na(+). An iodide-binding site is contributed by Val76. The Extracellular segment spans residues 81–84 (ARYG). Residues 85–105 (LKFLWMCVGQLLNSLLTALLF) traverse the membrane as a helical segment. Met90 is an iodide binding site. Residues 106–130 (LPIFYRLGLTSTYQYLELRFSRAVR) lie on the Cytoplasmic side of the membrane. A helical transmembrane segment spans residues 131 to 157 (LCGTLQYLVATMLYTGIVIYAPALILN). Tyr144 lines the Na(+) pocket. Residues 158 to 163 (QVTGLD) are Extracellular-facing. A helical transmembrane segment spans residues 164–181 (IWASLLSTGIICTLYTTV). The Cytoplasmic segment spans residues 182-189 (GGMKAVVW). The helical transmembrane segment at 190–208 (TDVFQVVVMLVGFWVILAR) threads the bilayer. Residues 209–243 (GVMLMGGPWNVLSLAQNHSRINLMDFDPDPRSRYT) are Extracellular-facing. Residues 244–266 (FWTFVVGGSLVWLSMYGVNQAQV) form a discontinuously helical membrane-spanning segment. Trp255 is a binding site for iodide. A Na(+)-binding site is contributed by Met258. At 267 to 278 (QRYVACHTERKA) the chain is on the cytoplasmic side. The helical transmembrane segment at 279 to 301 (KLALLVNQLGLFLIVASAACCGI) threads the bilayer. Topologically, residues 302–335 (VMFVYYKDCDPLLTGRIAAPDQYMPLLVLDIFED) are extracellular. The helical transmembrane segment at 336–363 (LPGVPGLFLACAYSGTLSTASTSINAMA) threads the bilayer. Residues 364–386 (AVTVEDLIKPRMPSLAPRKLVFI) lie on the Cytoplasmic side of the membrane. The helical transmembrane segment at 387–408 (SKGLSFIYGSTCLTVAALSSLL) threads the bilayer. Over 409 to 411 (GGG) the chain is Extracellular. The helical transmembrane segment at 412 to 437 (VLQGSFTVMGVISGPLLGAFTLGMLL) threads the bilayer. Leu413 provides a ligand contact to iodide. Na(+)-binding residues include Ser416 and Phe417. Phe417 serves as a coordination point for iodide. At 438 to 441 (PACN) the chain is on the cytoplasmic side. A helical membrane pass occupies residues 442 to 465 (TPGVLSGLTAGLAVSLWVAVGATL). The Extracellular segment spans residues 466–520 (YPPGEQTMGVLPTSAAGCTNASVLPSPPGAANTSRGIPSSGMDSGRPAFADTFYA). Asn485 and Asn497 each carry an N-linked (GlcNAc...) asparagine glycan. A helical transmembrane segment spans residues 521 to 545 (VSYLYYGALGTLTTMLCGALISYLT). At 546–618 (GPTKRSSLGP…YLGHDVETNL (73 aa)) the chain is on the cytoplasmic side. The residue at position 551 (Ser551) is a Phosphoserine; by PKA. The span at 571–587 (PKEDTTTLEDSLVKGPE) shows a compositional bias: basic and acidic residues. A disordered region spans residues 571–618 (PKEDTTTLEDSLVKGPEDIPAATKKPPGFRPEAETHPLYLGHDVETNL).

This sequence belongs to the sodium:solute symporter (SSF) (TC 2.A.21) family. As to quaternary structure, monomer. In terms of processing, glycosylated.

The protein localises to the cell membrane. Its subcellular location is the cytoplasm. It catalyses the reaction iodide(out) + 2 Na(+)(out) = iodide(in) + 2 Na(+)(in). The enzyme catalyses chlorate(out) + 2 Na(+)(out) = chlorate(in) + 2 Na(+)(in). The catalysed reaction is thiocyanate(out) + 2 Na(+)(out) = thiocyanate(in) + 2 Na(+)(in). It carries out the reaction nitrate(out) + 2 Na(+)(out) = nitrate(in) + 2 Na(+)(in). It catalyses the reaction selenocyanate(out) + 2 Na(+)(out) = selenocyanate(in) + 2 Na(+)(in). Its activity is regulated as follows. Perchlorate inhibits iodide transport activity. Oxyanions inhibit iodide transport activity by blocking the binding sites for iodide and one of the sodium ions. In terms of biological role, sodium:iodide symporter that mediates the transport of iodide into the thyroid gland. Can also mediate the transport of chlorate, thiocynate, nitrate and selenocynate. The protein is Sodium/iodide cotransporter (Slc5a5) of Mus musculus (Mouse).